The primary structure comprises 488 residues: Pup--protein ligase (488 aa).

Glutamate 34 contributes to the Mg(2+) binding site. Arginine 77 is a binding site for ATP. Position 79 (tyrosine 79) interacts with Mg(2+). Aspartate 81 serves as the catalytic Proton acceptor. Position 87 (glutamate 87) interacts with Mg(2+). Residues threonine 90 and tryptophan 453 each coordinate ATP.

Belongs to the Pup ligase/Pup deamidase family. Pup-conjugating enzyme subfamily.

The catalysed reaction is ATP + [prokaryotic ubiquitin-like protein]-L-glutamate + [protein]-L-lysine = ADP + phosphate + N(6)-([prokaryotic ubiquitin-like protein]-gamma-L-glutamyl)-[protein]-L-lysine.. The protein operates within protein degradation; proteasomal Pup-dependent pathway. It participates in protein modification; protein pupylation. Catalyzes the covalent attachment of the prokaryotic ubiquitin-like protein modifier Pup to the proteasomal substrate proteins, thereby targeting them for proteasomal degradation. This tagging system is termed pupylation. The ligation reaction involves the side-chain carboxylate of the C-terminal glutamate of Pup and the side-chain amino group of a substrate lysine. The sequence is that of Pup--protein ligase from Bifidobacterium dentium (strain ATCC 27534 / DSM 20436 / JCM 1195 / Bd1).